The chain runs to 1009 residues: Protein-tyrosine kinase 2-beta (1009 aa).

An FERM domain is found at 39-359; sequence RILKVCFYSN…GYCRLQGEHQ (321 aa). 3 positions are modified to phosphoserine: serine 361, serine 375, and serine 399. Tyrosine 402 is modified (phosphotyrosine; by autocatalysis). A Protein kinase domain is found at 425 to 683; that stretch reads VVLNRILGEG…ELVCSLSDVY (259 aa). ATP contacts are provided by residues 431 to 439, lysine 457, and 503 to 509; these read LGEGFFGEV and ELYPYGE. Aspartate 549 (proton acceptor) is an active-site residue. Tyrosine 579 is subject to Phosphotyrosine. A Phosphotyrosine; by SRC, FYN and LCK modification is found at tyrosine 580. Residues 701-725 form a disordered region; that stretch reads TPKILEPTAFQEPPPKPSRPKYRPP. Over residues 712–725 the composition is skewed to pro residues; sequence EPPPKPSRPKYRPP. Tyrosine 722 is subject to Phosphotyrosine. Serine 762 carries the post-translational modification Phosphoserine. At threonine 765 the chain carries Phosphothreonine. Residues 801 to 1009 form an interaction with TGFB1I1 region; it reads KVKMRQILDK…LANLAHPPAE (209 aa). Phosphotyrosine is present on residues tyrosine 819 and tyrosine 834. Serine 839 bears the Phosphoserine mark. Threonine 842 is modified (phosphothreonine). A Phosphotyrosine modification is found at tyrosine 849. Serine 866 carries the post-translational modification Phosphoserine. Positions 868–1009 are focal adhesion targeting (FAT); the sequence is QPTANLDRTD…LANLAHPPAE (142 aa). The residue at position 881 (tyrosine 881) is a Phosphotyrosine; by SRC.

Belongs to the protein kinase superfamily. Tyr protein kinase family. FAK subfamily. In terms of assembly, homodimer, or homooligomer. Interacts with SIRPA and SH2D3C. Interacts with ARHGAP10. Interacts with DLG4. Interacts with KCNA2. Interacts with NPHP1, ASAP1, ASAP2, ARHGAP26, SKAP2 and TGFB1I1. The Tyr-402 phosphorylated form interacts with SRC (via SH2 domain) and SRC family members. Forms a signaling complex with EPHA1, LCK and phosphatidylinositol 3-kinase; upon activation by EFNA1. Interacts with GRB2 (via SH2 domain). Interacts with P53/TP53 and MDM2. Interacts with MYLK. Interacts with BCAR1. Interacts with PDPK1. Interacts (hypophosphorylated) with PXN. Interacts with RB1CC1. Interacts with RHOU. Interacts with VAV1. Interacts with LPXN and PTPN12. In terms of processing, phosphorylated on tyrosine residues in response to various stimuli that elevate the intracellular calcium concentration; this activation is indirect and may be mediated by production of reactive oxygen species (ROS). Tyr-402 is the major autophosphorylation site, but other kinases can also phosphorylate Tyr-402. Autophosphorylation occurs in trans, i.e. one subunit of the dimeric receptor phosphorylates tyrosine residues on the other subunit. Phosphorylation at Tyr-402 promotes interaction with SRC and SRC family members, leading to phosphorylation at Tyr-579; Tyr-580 and Tyr-881. Phosphorylation at Tyr-881 is important for interaction with GRB2. Phosphorylated on tyrosine residues upon activation of FGR and PKC. Recruitment by NPHP1 to cell matrix adhesions initiates Tyr-402 phosphorylation. In monocytes, adherence to substrata is required for tyrosine phosphorylation and kinase activation. Angiotensin II, thapsigargin and L-alpha-lysophosphatidic acid (LPA) also induce autophosphorylation and increase kinase activity. Phosphorylation by MYLK promotes ITGB2 activation and is thus essential to trigger neutrophil transmigration during lung injury. Dephosphorylated by PTPN12. As to expression, most abundant in the brain, with highest levels in amygdala and hippocampus. Low levels in kidney (at protein level). Also expressed in spleen and lymphocytes.

The protein resides in the cytoplasm. The protein localises to the perinuclear region. It is found in the cell membrane. It localises to the cell junction. Its subcellular location is the focal adhesion. The protein resides in the cell projection. The protein localises to the lamellipodium. It is found in the cell cortex. It localises to the nucleus. It carries out the reaction L-tyrosyl-[protein] + ATP = O-phospho-L-tyrosyl-[protein] + ADP + H(+). Activated in response to stimuli that lead to increased intracellular Ca(2+) levels; this activation is indirect and may be mediated by calcium-mediated production of reactive oxygen species (ROS). Activated by autophosphorylation at Tyr-402; this creates a binding site for SRC family kinases and leads to phosphorylation at additional tyrosine residues. Phosphorylation at Tyr-402, Tyr-579 and Tyr-580 is required for optimal kinase activity. Inhibited by PF-562,271, BIRB796, PF-4618433 and by PF-431396, PF-2318841 and their derivatives. Inhibited by sulfoximine-substituted trifluoromethylpyrimidines. Inhibited by 4-amino and 5-aryl substituted pyridinone compounds. Functionally, non-receptor protein-tyrosine kinase that regulates reorganization of the actin cytoskeleton, cell polarization, cell migration, adhesion, spreading and bone remodeling. Plays a role in the regulation of the humoral immune response, and is required for normal levels of marginal B-cells in the spleen and normal migration of splenic B-cells. Required for normal macrophage polarization and migration towards sites of inflammation. Regulates cytoskeleton rearrangement and cell spreading in T-cells, and contributes to the regulation of T-cell responses. Promotes osteoclastic bone resorption; this requires both PTK2B/PYK2 and SRC. May inhibit differentiation and activity of osteoprogenitor cells. Functions in signaling downstream of integrin and collagen receptors, immune receptors, G-protein coupled receptors (GPCR), cytokine, chemokine and growth factor receptors, and mediates responses to cellular stress. Forms multisubunit signaling complexes with SRC and SRC family members upon activation; this leads to the phosphorylation of additional tyrosine residues, creating binding sites for scaffold proteins, effectors and substrates. Regulates numerous signaling pathways. Promotes activation of phosphatidylinositol 3-kinase and of the AKT1 signaling cascade. Promotes activation of NOS3. Regulates production of the cellular messenger cGMP. Promotes activation of the MAP kinase signaling cascade, including activation of MAPK1/ERK2, MAPK3/ERK1 and MAPK8/JNK1. Promotes activation of Rho family GTPases, such as RHOA and RAC1. Recruits the ubiquitin ligase MDM2 to P53/TP53 in the nucleus, and thereby regulates P53/TP53 activity, P53/TP53 ubiquitination and proteasomal degradation. Acts as a scaffold, binding to both PDPK1 and SRC, thereby allowing SRC to phosphorylate PDPK1 at 'Tyr-9, 'Tyr-373', and 'Tyr-376'. Promotes phosphorylation of NMDA receptors by SRC family members, and thereby contributes to the regulation of NMDA receptor ion channel activity and intracellular Ca(2+) levels. May also regulate potassium ion transport by phosphorylation of potassium channel subunits. Phosphorylates SRC; this increases SRC kinase activity. Phosphorylates ASAP1, NPHP1, KCNA2 and SHC1. Promotes phosphorylation of ASAP2, RHOU and PXN; this requires both SRC and PTK2/PYK2. The protein is Protein-tyrosine kinase 2-beta (PTK2B) of Homo sapiens (Human).